The following is an 862-amino-acid chain: C-type lectin domain-containing protein 161 (862 aa).

Positions 1–20 are cleaved as a signal peptide; the sequence is MYRRTTLWFLLLFQPILVFA. N-linked (GlcNAc...) asparagine glycans are attached at residues Asn22 and Asn91. Residues 41-154 form the C-type lectin 1 domain; the sequence is SLNACFKLYN…VGQKLPFVCT (114 aa). Cys62 and Cys153 are oxidised to a cystine. The tract at residues 162-291 is disordered; the sequence is AGPAPVHAMR…SDESSDEAYD (130 aa). Over residues 198 to 218 the composition is skewed to basic and acidic residues; it reads SDKKEKKEVASDKKKESKKDE. N-linked (GlcNAc...) asparagine glycosylation is present at Asn222. The segment covering 242-252 has biased composition (basic and acidic residues); the sequence is SDKKESSKKDE. 3 N-linked (GlcNAc...) asparagine glycosylation sites follow: Asn258, Asn279, and Asn352. Residues 265–283 show a composition bias toward low complexity; that stretch reads ANAEMSASISASSANSSSD. Disordered stretches follow at residues 377–437, 450–469, and 474–504; these read MTMR…SASL, ALAS…QKSA, and AVVS…IDES. The span at 388-418 shows a compositional bias: low complexity; the sequence is SSSNTDSESASISESSQASEQAVMAAAMSAK. 2 stretches are compositionally biased toward basic and acidic residues: residues 455 to 467 and 478 to 491; these read SKSD…KDQK and ENKH…DPKS. Asn559 carries an N-linked (GlcNAc...) asparagine glycan. 2 C-type lectin domains span residues 562–687 and 716–828; these read APAL…SVLC and KNGK…FVSV. Cys653 and Cys678 are oxidised to a cystine. Residue Asn765 is glycosylated (N-linked (GlcNAc...) asparagine). A disulfide bridge links Cys807 with Cys819. N-linked (GlcNAc...) asparagine glycosylation is found at Asn831 and Asn857.

The protein resides in the secreted. The polypeptide is C-type lectin domain-containing protein 161 (clec-161) (Caenorhabditis elegans).